The chain runs to 314 residues: tRNA dimethylallyltransferase (314 aa).

6-13 (GPTAVGKT) serves as a coordination point for ATP. 8–13 (TAVGKT) contributes to the substrate binding site. An interaction with substrate tRNA region spans residues 31-34 (DSRQ).

It belongs to the IPP transferase family. As to quaternary structure, monomer. Mg(2+) is required as a cofactor.

It carries out the reaction adenosine(37) in tRNA + dimethylallyl diphosphate = N(6)-dimethylallyladenosine(37) in tRNA + diphosphate. Its function is as follows. Catalyzes the transfer of a dimethylallyl group onto the adenine at position 37 in tRNAs that read codons beginning with uridine, leading to the formation of N6-(dimethylallyl)adenosine (i(6)A). This chain is tRNA dimethylallyltransferase, found in Pseudothermotoga lettingae (strain ATCC BAA-301 / DSM 14385 / NBRC 107922 / TMO) (Thermotoga lettingae).